Here is a 180-residue protein sequence, read N- to C-terminus: Large ribosomal subunit protein uL6 (180 aa).

It belongs to the universal ribosomal protein uL6 family. As to quaternary structure, part of the 50S ribosomal subunit.

Its function is as follows. This protein binds to the 23S rRNA, and is important in its secondary structure. It is located near the subunit interface in the base of the L7/L12 stalk, and near the tRNA binding site of the peptidyltransferase center. This Desulforapulum autotrophicum (strain ATCC 43914 / DSM 3382 / VKM B-1955 / HRM2) (Desulfobacterium autotrophicum) protein is Large ribosomal subunit protein uL6.